An 804-amino-acid chain; its full sequence is Ribonucleoside-diphosphate reductase large subunit-like protein (804 aa).

Belongs to the ribonucleoside diphosphate reductase large chain family. The genome of human herpesvirus-6 does not code for a ribonucleotide reductase small subunit.

The protein localises to the virion. The protein resides in the host cytoplasm. Does not possess a ribonucleotide reductase activity. Betaherpesviruses probably use another strategy to expand the dNTP pool in a quiescent host cell. This Human herpesvirus 6B (strain Z29) (HHV-6 variant B) protein is Ribonucleoside-diphosphate reductase large subunit-like protein.